The primary structure comprises 199 residues: Cytochrome c oxidase assembly protein CtaG (199 aa).

Over 1–12 (MTNTPQTPPKER) the chain is Cytoplasmic. Residues 13 to 35 (ANGVIVGACLAFVAGMVGMAYAA) form a helical; Signal-anchor for type II membrane protein membrane-spanning segment. The Periplasmic portion of the chain corresponds to 36–199 (VPLYDMFCRV…VKDGETENRL (164 aa)).

It belongs to the COX11/CtaG family.

It is found in the cell inner membrane. In terms of biological role, exerts its effect at some terminal stage of cytochrome c oxidase synthesis, probably by being involved in the insertion of the copper B into subunit I. This Sinorhizobium fredii (strain NBRC 101917 / NGR234) protein is Cytochrome c oxidase assembly protein CtaG.